The primary structure comprises 222 residues: Leucyl/phenylalanyl-tRNA--protein transferase (222 aa).

Belongs to the L/F-transferase family.

Its subcellular location is the cytoplasm. The enzyme catalyses N-terminal L-lysyl-[protein] + L-leucyl-tRNA(Leu) = N-terminal L-leucyl-L-lysyl-[protein] + tRNA(Leu) + H(+). The catalysed reaction is N-terminal L-arginyl-[protein] + L-leucyl-tRNA(Leu) = N-terminal L-leucyl-L-arginyl-[protein] + tRNA(Leu) + H(+). It carries out the reaction L-phenylalanyl-tRNA(Phe) + an N-terminal L-alpha-aminoacyl-[protein] = an N-terminal L-phenylalanyl-L-alpha-aminoacyl-[protein] + tRNA(Phe). Functions in the N-end rule pathway of protein degradation where it conjugates Leu, Phe and, less efficiently, Met from aminoacyl-tRNAs to the N-termini of proteins containing an N-terminal arginine or lysine. The chain is Leucyl/phenylalanyl-tRNA--protein transferase from Legionella pneumophila (strain Paris).